The sequence spans 41 residues: Replication-associated protein (41 aa).

Involved in viral RNA replication. This is Replication-associated protein from Potato leafroll virus (strain Potato/Scotland/strain 1/1984) (PLrV).